The primary structure comprises 164 residues: Interleukin-31 (164 aa).

An N-terminal signal peptide occupies residues Met1–Ala23. N-linked (GlcNAc...) asparagine glycans are attached at residues Asn67 and Asn100.

In terms of tissue distribution, detected at low levels in testis, bone marrow, skeletal muscle, kidney, colon, thymus, small intestine and trachea.

The protein localises to the secreted. Functionally, activates STAT3 and possibly STAT1 and STAT5 through the IL31 heterodimeric receptor composed of IL31RA and OSMR. May function in skin immunity. Enhances myeloid progenitor cell survival in vitro. Induces RETNLA and serum amyloid A protein expression in macrophages. The protein is Interleukin-31 (IL31) of Homo sapiens (Human).